The sequence spans 514 residues: Serine--tRNA ligase, cytoplasmic (514 aa).

N-acetylmethionine is present on methionine 1. Residues 9–61 (RVDKGGDPALIRETQEKRFKDPGLVDQLVKADSEWRRCRFRADNLNKLKNLCS) form an interaction with tRNA region. Serine 241 is subject to Phosphoserine. L-serine contacts are provided by threonine 271 and arginine 302. Residues 302–304 (RQE) and 318–321 (VHQF) each bind ATP. The residue at position 323 (lysine 323) is an N6-acetyllysine. Glutamate 325 contributes to the L-serine binding site. Position 391 to 394 (391 to 394 (ELVS)) interacts with ATP. Asparagine 427 is a binding site for L-serine. The segment at 473–514 (PAPIEQEPSKKQKKQHEGSKKKAAARDVTLENRLQNMEVTDA) is disordered. Residues 479 to 502 (EPSKKQKKQHEGSKKKAAARDVTL) are compositionally biased toward basic and acidic residues. A Nuclear localization signal motif is present at residues 482–494 (KKQKKQHEGSKKK). Positions 504–514 (NRLQNMEVTDA) are enriched in polar residues.

This sequence belongs to the class-II aminoacyl-tRNA synthetase family. Type-1 seryl-tRNA synthetase subfamily. Homodimer. The tRNA molecule may bind across the dimer. Interacts with SIRT2. Interacts with METTL6; interaction is required for the tRNA N(3)-methylcytidine methyltransferase activity of METTL6. Brain.

The protein localises to the cytoplasm. Its subcellular location is the nucleus. The enzyme catalyses tRNA(Ser) + L-serine + ATP = L-seryl-tRNA(Ser) + AMP + diphosphate + H(+). The catalysed reaction is tRNA(Sec) + L-serine + ATP = L-seryl-tRNA(Sec) + AMP + diphosphate + H(+). Its pathway is aminoacyl-tRNA biosynthesis; selenocysteinyl-tRNA(Sec) biosynthesis; L-seryl-tRNA(Sec) from L-serine and tRNA(Sec): step 1/1. Functionally, catalyzes the attachment of serine to tRNA(Ser) in a two-step reaction: serine is first activated by ATP to form Ser-AMP and then transferred to the acceptor end of tRNA(Ser). Is probably also able to aminoacylate tRNA(Sec) with serine, to form the misacylated tRNA L-seryl-tRNA(Sec), which will be further converted into selenocysteinyl-tRNA(Sec). In the nucleus, binds to the VEGFA core promoter and prevents MYC binding and transcriptional activation by MYC. Recruits SIRT2 to the VEGFA promoter, promoting deacetylation of histone H4 at 'Lys-16' (H4K16). Thereby, inhibits the production of VEGFA and sprouting angiogenesis mediated by VEGFA. This Homo sapiens (Human) protein is Serine--tRNA ligase, cytoplasmic.